The primary structure comprises 387 residues: Succinate--CoA ligase [ADP-forming] subunit beta (387 aa).

The ATP-grasp domain maps to 9–244 (KQLFAEYGIP…KTQEDETEVL (236 aa)). Residues Lys-46, 53–55 (GRG), Gly-102, and Glu-107 each bind ATP. Mg(2+)-binding residues include Asn-199 and Asp-213. Residues Asn-264 and 321-323 (GIV) each bind substrate.

Belongs to the succinate/malate CoA ligase beta subunit family. As to quaternary structure, heterotetramer of two alpha and two beta subunits. It depends on Mg(2+) as a cofactor.

The enzyme catalyses succinate + ATP + CoA = succinyl-CoA + ADP + phosphate. It carries out the reaction GTP + succinate + CoA = succinyl-CoA + GDP + phosphate. The protein operates within carbohydrate metabolism; tricarboxylic acid cycle; succinate from succinyl-CoA (ligase route): step 1/1. Its function is as follows. Succinyl-CoA synthetase functions in the citric acid cycle (TCA), coupling the hydrolysis of succinyl-CoA to the synthesis of either ATP or GTP and thus represents the only step of substrate-level phosphorylation in the TCA. The beta subunit provides nucleotide specificity of the enzyme and binds the substrate succinate, while the binding sites for coenzyme A and phosphate are found in the alpha subunit. The polypeptide is Succinate--CoA ligase [ADP-forming] subunit beta (Xylella fastidiosa (strain 9a5c)).